The following is a 76-amino-acid chain: DNA-directed RNA polymerase subunit epsilon (76 aa).

It belongs to the RNA polymerase subunit epsilon family. As to quaternary structure, RNAP is composed of a core of 2 alpha, a beta and a beta' subunit. The core is associated with a delta subunit, and at least one of epsilon or omega. When a sigma factor is associated with the core the holoenzyme is formed, which can initiate transcription.

It catalyses the reaction RNA(n) + a ribonucleoside 5'-triphosphate = RNA(n+1) + diphosphate. In terms of biological role, a non-essential component of RNA polymerase (RNAP). This Streptococcus thermophilus (strain CNRZ 1066) protein is DNA-directed RNA polymerase subunit epsilon.